The following is a 291-amino-acid chain: Asialoglycoprotein receptor 1 (291 aa).

Positions 1-19 are enriched in basic and acidic residues; sequence MTKECQDLQHLDNEESDHH. The segment at 1–27 is disordered; it reads MTKECQDLQHLDNEESDHHQLRKGPPP. Residues 1 to 40 lie on the Cytoplasmic side of the membrane; the sequence is MTKECQDLQHLDNEESDHHQLRKGPPPSQPLLQRLCSGPR. Positions 5 to 8 match the Endocytosis signal motif; that stretch reads CQDL. Residue Ser-16 is modified to Phosphoserine. Cys-36 carries the S-palmitoyl cysteine lipid modification. A helical; Signal-anchor for type II membrane protein membrane pass occupies residues 41-61; it reads LLLLSLGLSLLLLVVVCVIGS. The stretch at 61–123 forms a coiled coil; it reads SQNSQLQKEL…KDLSEDHSSL (63 aa). Over 62–291 the chain is Extracellular; it reads QNSQLQKELR…DKASQEPPLL (230 aa). N-linked (GlcNAc...) asparagine glycosylation is found at Asn-79 and Asn-147. Intrachain disulfides connect Cys-154–Cys-165, Cys-182–Cys-277, and Cys-255–Cys-269. Residues 161-278 enclose the C-type lectin domain; the sequence is HERSCYWFSR…CQRPYRWVCE (118 aa). Positions 191, 197, 216, 240, 242, 243, 253, 254, 265, 266, and 278 each coordinate Ca(2+). Phosphoserine is present on Ser-285.

Interacts with LASS2. In terms of processing, phosphorylated on a cytoplasmic Ser residue.

It is found in the membrane. Its function is as follows. Mediates the endocytosis of plasma glycoproteins to which the terminal sialic acid residue on their complex carbohydrate moieties has been removed. The receptor recognizes terminal galactose and N-acetylgalactosamine units. After ligand binding to the receptor, the resulting complex is internalized and transported to a sorting organelle, where receptor and ligand are disassociated. The receptor then returns to the cell membrane surface. The sequence is that of Asialoglycoprotein receptor 1 (ASGR1) from Pongo abelii (Sumatran orangutan).